The sequence spans 156 residues: Cytochrome c-type biogenesis protein CcmE (156 aa).

Residues 1–8 are Cytoplasmic-facing; the sequence is MNPLRRKR. The chain crosses the membrane as a helical; Signal-anchor for type II membrane protein span at residues 9 to 29; that stretch reads LLIILAILAGVGIAVGLAMSA. Topologically, residues 30 to 156 are periplasmic; sequence LRENINLFYT…RIRSLPRRAK (127 aa). Heme-binding residues include H124 and Y128.

This sequence belongs to the CcmE/CycJ family.

The protein localises to the cell inner membrane. Heme chaperone required for the biogenesis of c-type cytochromes. Transiently binds heme delivered by CcmC and transfers the heme to apo-cytochromes in a process facilitated by CcmF and CcmH. In Pseudomonas fluorescens, this protein is Cytochrome c-type biogenesis protein CcmE.